We begin with the raw amino-acid sequence, 204 residues long: High frequency lysogenization protein HflD homolog (204 aa).

It belongs to the HflD family.

It is found in the cytoplasm. It localises to the cell inner membrane. In Xanthomonas euvesicatoria pv. vesicatoria (strain 85-10) (Xanthomonas campestris pv. vesicatoria), this protein is High frequency lysogenization protein HflD homolog.